A 142-amino-acid chain; its full sequence is Large ribosomal subunit protein bL21 (142 aa).

Over residues 73-84 (KRRRQNSKRTRG) the composition is skewed to basic residues. A disordered region spans residues 73–142 (KRRRQNSKRT…KAAAKAESAE (70 aa)). A compositionally biased stretch (basic and acidic residues) spans 107 to 125 (KAAEKKAPKADAAEGEAAK). A compositionally biased stretch (basic residues) spans 126–135 (PKKAAPKKAA).

It belongs to the bacterial ribosomal protein bL21 family. Part of the 50S ribosomal subunit. Contacts protein L20.

Its function is as follows. This protein binds to 23S rRNA in the presence of protein L20. This chain is Large ribosomal subunit protein bL21, found in Brucella canis (strain ATCC 23365 / NCTC 10854 / RM-666).